Here is a 195-residue protein sequence, read N- to C-terminus: Nicotinamide riboside kinase 1 (195 aa).

10 to 18 contributes to the ATP binding site; it reads GVTNGGKTT. Mg(2+) contacts are provided by Thr-17 and Asp-36. Asp-36 (proton acceptor) is an active-site residue. Residues 36-39 and 55-56 contribute to the substrate site; these read DDFF and YD. Residue Arg-128 coordinates ATP. Substrate contacts are provided by residues Arg-129 and 134–135; that span reads YE. Residues 132-134 and 172-174 each bind ATP; these read RVY and RSE.

The protein belongs to the uridine kinase family. NRK subfamily. In terms of assembly, monomer.

It catalyses the reaction beta-nicotinamide D-riboside + ATP = beta-nicotinamide D-ribonucleotide + ADP + H(+). The enzyme catalyses beta-D-ribosylnicotinate + ATP = nicotinate beta-D-ribonucleotide + ADP + H(+). It functions in the pathway cofactor biosynthesis; NAD(+) biosynthesis. Catalyzes the phosphorylation of nicotinamide riboside (NR) and nicotinic acid riboside (NaR) to form nicotinamide mononucleotide (NMN) and nicotinic acid mononucleotide (NaMN). This is Nicotinamide riboside kinase 1 (Nmrk1) from Mus musculus (Mouse).